We begin with the raw amino-acid sequence, 296 residues long: Pantothenate synthetase (296 aa).

31–38 (MGYLHEGH) provides a ligand contact to ATP. The active-site Proton donor is the H38. Q62 serves as a coordination point for (R)-pantoate. Q62 provides a ligand contact to beta-alanine. 148–151 (GEKD) is an ATP binding site. (R)-pantoate is bound at residue Q154. ATP is bound by residues V177 and 185–188 (LSSR).

It belongs to the pantothenate synthetase family. As to quaternary structure, homodimer.

The protein resides in the cytoplasm. The catalysed reaction is (R)-pantoate + beta-alanine + ATP = (R)-pantothenate + AMP + diphosphate + H(+). Its pathway is cofactor biosynthesis; (R)-pantothenate biosynthesis; (R)-pantothenate from (R)-pantoate and beta-alanine: step 1/1. Its function is as follows. Catalyzes the condensation of pantoate with beta-alanine in an ATP-dependent reaction via a pantoyl-adenylate intermediate. This is Pantothenate synthetase from Deinococcus geothermalis (strain DSM 11300 / CIP 105573 / AG-3a).